Here is a 343-residue protein sequence, read N- to C-terminus: Phenylalanine--tRNA ligase alpha subunit (343 aa).

Residue glutamate 258 participates in Mg(2+) binding.

Belongs to the class-II aminoacyl-tRNA synthetase family. Phe-tRNA synthetase alpha subunit type 1 subfamily. Tetramer of two alpha and two beta subunits. It depends on Mg(2+) as a cofactor.

It is found in the cytoplasm. The catalysed reaction is tRNA(Phe) + L-phenylalanine + ATP = L-phenylalanyl-tRNA(Phe) + AMP + diphosphate + H(+). The sequence is that of Phenylalanine--tRNA ligase alpha subunit from Symbiobacterium thermophilum (strain DSM 24528 / JCM 14929 / IAM 14863 / T).